The following is a 481-amino-acid chain: ADAMTS-like protein 5 (481 aa).

Residues 1-42 (MGKLRPGRVEWLASGHTERPHLFQNLLLFLWALLNCGLGVSA) form the signal peptide. One can recognise a TSP type-1 domain in the interval 45 to 97 (PGEWTPWVSWTRCSSSCGRGVSVRSRRCLRLPGEEPCWGDSHEYRLCQLPDCP). Disulfide bonds link Cys57-Cys91, Cys61-Cys96, and Cys72-Cys81. Asn218 carries N-linked (GlcNAc...) asparagine glycosylation. Positions 331 to 361 (QPQPRGVEPQPPAAPAVTPAQTPTLAPDPCP) are disordered. Positions 345 to 355 (PAVTPAQTPTL) are enriched in low complexity. 3 cysteine pairs are disulfide-bonded: Cys360–Cys425, Cys363–Cys427, and Cys377–Cys479. One can recognise an NTR domain in the interval 360 to 479 (CPPCPDTRGR…SRIRLTARRC (120 aa)).

In terms of assembly, interacts with heparin, FBN1 and FBN2. In terms of processing, proteolytically cleaved to release a C-terminal fragment containing the NTR domain. Post-translationally, contains at least one additional N-linked glycosylation site.

The protein resides in the secreted. The protein localises to the extracellular space. It is found in the extracellular matrix. Its function is as follows. May play a role in modulation of fibrillin microfibrils in the extracellular matrix (ECM). The chain is ADAMTS-like protein 5 (ADAMTSL5) from Homo sapiens (Human).